The primary structure comprises 547 residues: Hydroxylamine reductase (547 aa).

[4Fe-4S] cluster-binding residues include Cys-5, Cys-8, Cys-17, and Cys-23. Hybrid [4Fe-2O-2S] cluster is bound by residues His-242, Glu-266, Cys-310, Cys-401, Cys-429, Cys-454, Glu-489, and Lys-491. Position 401 is a cysteine persulfide (Cys-401).

This sequence belongs to the HCP family. It depends on [4Fe-4S] cluster as a cofactor. Requires hybrid [4Fe-2O-2S] cluster as cofactor.

The protein resides in the cytoplasm. It catalyses the reaction A + NH4(+) + H2O = hydroxylamine + AH2 + H(+). Catalyzes the reduction of hydroxylamine to form NH(3) and H(2)O. The protein is Hydroxylamine reductase of Thermoanaerobacter pseudethanolicus (strain ATCC 33223 / 39E) (Clostridium thermohydrosulfuricum).